The chain runs to 265 residues: Tryptophan synthase alpha chain (265 aa).

Residues Glu49 and Asp60 each act as proton acceptor in the active site.

It belongs to the TrpA family. As to quaternary structure, tetramer of two alpha and two beta chains.

It catalyses the reaction (1S,2R)-1-C-(indol-3-yl)glycerol 3-phosphate + L-serine = D-glyceraldehyde 3-phosphate + L-tryptophan + H2O. The protein operates within amino-acid biosynthesis; L-tryptophan biosynthesis; L-tryptophan from chorismate: step 5/5. Functionally, the alpha subunit is responsible for the aldol cleavage of indoleglycerol phosphate to indole and glyceraldehyde 3-phosphate. This Paracoccus denitrificans (strain Pd 1222) protein is Tryptophan synthase alpha chain.